A 151-amino-acid polypeptide reads, in one-letter code: MSQLLEKAKDFVVDKVANIKKPEASVSDVDLKHVSRECVEYGAKVSVSNPYSHSIPICEISYNFRSAGRGIASGTIPDPGSLKASDTTMLDVPVKVPYNILVSLVKDIGADWDIDYELELGLTIDLPIVGNFTIPLSQKGEIKLPTLSDIF.

Belongs to the LEA type 2 family.

The protein is Late embryogenesis abundant protein Lea14-A (LEA14-A) of Gossypium hirsutum (Upland cotton).